The sequence spans 246 residues: Exosome complex component Rrp41 (246 aa).

The protein belongs to the RNase PH family. Rrp41 subfamily. In terms of assembly, component of the archaeal exosome complex. Forms a hexameric ring-like arrangement composed of 3 Rrp41-Rrp42 heterodimers. The hexameric ring associates with a trimer of Rrp4 and/or Csl4 subunits.

It is found in the cytoplasm. Functionally, catalytic component of the exosome, which is a complex involved in RNA degradation. Has 3'-&gt;5' exoribonuclease activity. Can also synthesize heteromeric RNA-tails. The polypeptide is Exosome complex component Rrp41 (Pyrobaculum aerophilum (strain ATCC 51768 / DSM 7523 / JCM 9630 / CIP 104966 / NBRC 100827 / IM2)).